Here is a 525-residue protein sequence, read N- to C-terminus: Estrogen receptor (525 aa).

The segment at 1–59 is disordered; it reads PTSPLVFVPSSPRLSPFMHPPSHHYLETTSTPVYRSSVSSSQQQLSREDQCGTSDDSYS. The tract at residues 1–82 is modulating; the sequence is PTSPLVFVPS…GFEMAKEMRF (82 aa). Residues 36-45 show a composition bias toward low complexity; that stretch reads SSVSSSQQQL. 2 NR C4-type zinc fingers span residues 83–103 and 119–143; these read CAVC…CEGC and CPAT…LRKC. A DNA-binding region (nuclear receptor) is located at residues 83 to 148; it reads CAVCSDYASG…RLRKCYQVGM (66 aa). A hinge region spans residues 149-209; that stretch reads MKGGVRKDRG…GGGKSSIIGM (61 aa). The segment covering 154 to 182 has biased composition (basic and acidic residues); the sequence is RKDRGRVLRRDKRRTGTSDKASKDLEHRT. The disordered stretch occupies residues 154 to 203; the sequence is RKDRGRVLRRDKRRTGTSDKASKDLEHRTAPPQDRRKHSSSSSSAGGGGK. One can recognise an NR LBD domain in the interval 210–446; it reads SPDQVLLLLQ…DLLLEMLDAH (237 aa). Positions 452–465 are enriched in basic and acidic residues; it reads DRPAESWSQADREP. The disordered stretch occupies residues 452–525; the sequence is DRPAESWSQA…GPRSDCTHIL (74 aa). The span at 479-493 shows a compositional bias: gly residues; that stretch reads SGGGDGGPSSAGSGS.

The protein belongs to the nuclear hormone receptor family. NR3 subfamily. As to quaternary structure, binds DNA as a homodimer. Can form a heterodimer with ER-beta. In terms of tissue distribution, abundant in the liver, less abundant in the testes and barely detectable in the ovary and brain.

It localises to the nucleus. The steroid hormones and their receptors are involved in the regulation of eukaryotic gene expression and affect cellular proliferation and differentiation in target tissues. This Micropogonias undulatus (Atlantic croaker) protein is Estrogen receptor (esr1).